Consider the following 450-residue polypeptide: Probable malate:quinone oxidoreductase (450 aa).

The protein belongs to the MQO family. FAD is required as a cofactor.

The enzyme catalyses (S)-malate + a quinone = a quinol + oxaloacetate. It participates in carbohydrate metabolism; tricarboxylic acid cycle; oxaloacetate from (S)-malate (quinone route): step 1/1. This chain is Probable malate:quinone oxidoreductase, found in Helicobacter acinonychis (strain Sheeba).